Consider the following 253-residue polypeptide: RAD51-associated protein 1 (253 aa).

Residues 32–51 are interaction with DNA; sequence APLTKKSRTQPKEPKKENKK. 3 disordered regions span residues 33 to 74, 141 to 169, and 184 to 244; these read PLTK…TSLD, DREH…EGND, and KKIK…WVPP. The segment covering 154-169 has biased composition (acidic residues); that stretch reads PDEESEEDSDYREGND. Positions 184 to 195 are enriched in basic residues; it reads KKIKRQTRKEKK. The segment at 190–241 is interaction with DNA; it reads TRKEKKTPKSENNTTVMELKSEQTQKMMSTSSEPVGRPLYTSSPVTNKKPKW. The segment covering 199-222 has biased composition (polar residues); sequence SENNTTVMELKSEQTQKMMSTSSE.

Monomer.

It is found in the chromosome. Its subcellular location is the nucleus. Structure-specific DNA-binding protein involved in DNA repair by promoting RAD51-mediated homologous recombination. Acts by stimulating D-Loop formation by RAD51: specifically enhances joint molecule formation through its structure-specific DNA interaction and its interaction with RAD51. Binds single-stranded DNA (ssDNA), double-stranded DNA (dsDNA) and secondary DNA structures, such as D-loop structures: has a strong preference for branched-DNA structures that are obligatory intermediates during joint molecule formation. Involved in mitotic recombination-dependent replication fork processing. Also involved in meiosis by promoting DMC1-mediated homologous meiotic recombination. In Gallus gallus (Chicken), this protein is RAD51-associated protein 1.